Consider the following 410-residue polypeptide: Multidrug resistance protein MdtM (410 aa).

The Cytoplasmic segment spans residues 1–11; sequence MPRFFTRHAAT. The helical transmembrane segment at 12–32 threads the bilayer; sequence LFFPMALILYDFAAYLSTDLI. Residues 33 to 48 are Periplasmic-facing; sequence QPGIINVVRDFNADVS. Residues 49–69 form a helical membrane-spanning segment; it reads LAPAAVSLYLAGGMALQWLLG. Over 70 to 78 the chain is Cytoplasmic; the sequence is PLSDRIGRR. The helical transmembrane segment at 79-99 threads the bilayer; it reads PVLITGALIFTLACAATMFTT. Over 100-103 the chain is Periplasmic; the sequence is SMTQ. A helical membrane pass occupies residues 104-124; that stretch reads FLIARAIQGTSICFIATVGYV. The Cytoplasmic segment spans residues 125–140; that stretch reads TVQEAFGQTKGIKLMA. A helical transmembrane segment spans residues 141-161; that stretch reads IITSIVLIAPIIGPLSGAALM. The Periplasmic portion of the chain corresponds to 162–167; that stretch reads HFMHWK. Residues 168–188 form a helical membrane-spanning segment; the sequence is VLFAIIAVMGFISFVGLLLAM. At 189 to 216 the chain is on the cytoplasmic side; sequence PETVKRGAVPFSAKSVLRDFRNVFCNRL. The chain crosses the membrane as a helical span at residues 217 to 237; that stretch reads FLFGAATISLSYIPMMSWVAV. Topologically, residues 238 to 251 are periplasmic; sequence SPVILIDAGSLTTS. The helical transmembrane segment at 252–272 threads the bilayer; the sequence is QFAWTQVPVFGAVIVANAIVA. The Cytoplasmic portion of the chain corresponds to 273-282; that stretch reads RFVKDPTEPR. Residues 283–303 form a helical membrane-spanning segment; sequence FIWRAVPIQLVGLSLLIVGNL. Residues 304-307 lie on the Periplasmic side of the membrane; sequence LSPH. The helical transmembrane segment at 308–328 threads the bilayer; it reads VWLWSVLGTSLYAFGIGLIFP. The Cytoplasmic portion of the chain corresponds to 329–348; sequence TLFRFTLFSNKLPKGTVSAS. The helical transmembrane segment at 349–369 threads the bilayer; it reads LNMVILMVMSVSVEIGRWLWF. At 370–373 the chain is on the periplasmic side; that stretch reads NGGR. Residues 374-394 form a helical membrane-spanning segment; sequence LPFHLLAVVAGVIVVFTLAGL. Topologically, residues 395–410 are cytoplasmic; that stretch reads LNRVRQHQAAELVEEQ.

This sequence belongs to the major facilitator superfamily. As to quaternary structure, monomer.

Its subcellular location is the cell inner membrane. It catalyses the reaction Na(+)(in) + 2 H(+)(out) = Na(+)(out) + 2 H(+)(in). The catalysed reaction is K(+)(in) + H(+)(out) = K(+)(out) + H(+)(in). With respect to regulation, efflux is inhibited by the ionophore carbonyl cyanide 3-chlorophenylhydrazone (CCCP). Functionally, proton-dependent efflux pump. Confers resistance to a broad spectrum of chemically unrelated substrates. Overexpression confers resistance to acriflavine, chloramphenicol, norfloxacin, ethidium bromide and tetraphenylphosphonium bromide (TPP). Can also export a broad range of quaternary ammonium compounds (QACs) and contribute to the intrinsic resistance of E.coli to these antimicrobial compounds. In addition to its role in multidrug resistance, MdtM likely plays a physiological role in alkaline pH homeostasis and in resistance to bile salts. May function in alkaline pH homeostasis when millimolar concentrations of sodium or potassium are present in the growth medium. When overexpressed, can confer a tolerance to alkaline pH values up to 9.75. Probably acts as a low-affinity antiporter that catalyzes the exchange of internal Na(+) and K(+) cations for extracellular protons to maintain a stable internal pH, acid relative to outside, during exposure to alkaline environments. Can also catalyze Rb(+)/H(+) and Li(+)/H(+) antiport, but not Ca(2+)/H(+) exchange. The exact stoichiometry of antiport is unknown. Finally, it could contribute to bile salt resistance by catalyzing the transport of bile salts out of the cell cytoplasm. Mediates a bile salt/H(+) exchange driven by the electrochemical gradient. Binds to cholate and deoxycholate with micromolar affinity and catalyzes both cholate/H(+) and deoxycholate/H(+) exchange reactions. In Escherichia coli (strain K12), this protein is Multidrug resistance protein MdtM.